The chain runs to 39 residues: Bomanin Short 3 (39 aa).

Residues 1-18 (MKFLSLAFVLGLLALANA) form the signal peptide. Positions 19-23 (TPLNP) are excised as a propeptide. A disulfide bridge connects residues Cys-32 and Cys-35.

It belongs to the bomanin family. Hemolymph (at protein level).

The protein localises to the secreted. In terms of biological role, secreted immune-induced peptide induced by Toll signaling. Has a role in resistance bacterial and fungal infections. The strength of antimicrobial activity appears to correlate with the overall level of expression. Has no activity against the fungus C.glabrata in vitro. This Drosophila melanogaster (Fruit fly) protein is Bomanin Short 3.